The chain runs to 79 residues: MAQQRRGGRKRRKVDYIAANHIEYIDYKDTELLKRFISERGKILPRRVTGTGAKNQRKLTIAIKRARIMGLLPFVSDEQ.

The protein belongs to the bacterial ribosomal protein bS18 family. In terms of assembly, part of the 30S ribosomal subunit. Forms a tight heterodimer with protein bS6.

Functionally, binds as a heterodimer with protein bS6 to the central domain of the 16S rRNA, where it helps stabilize the platform of the 30S subunit. The polypeptide is Small ribosomal subunit protein bS18 (Enterococcus faecalis (strain ATCC 700802 / V583)).